An 84-amino-acid polypeptide reads, in one-letter code: Small ribosomal subunit protein uS17 (84 aa).

The protein belongs to the universal ribosomal protein uS17 family. Part of the 30S ribosomal subunit.

Functionally, one of the primary rRNA binding proteins, it binds specifically to the 5'-end of 16S ribosomal RNA. The sequence is that of Small ribosomal subunit protein uS17 from Borreliella burgdorferi (strain ATCC 35210 / DSM 4680 / CIP 102532 / B31) (Borrelia burgdorferi).